We begin with the raw amino-acid sequence, 164 residues long: Protein SprT (164 aa).

Residues 13–156 enclose the SprT-like domain; the sequence is YQQAEAFFKR…LCRRCREPLV (144 aa). Position 69 (histidine 69) interacts with Zn(2+). Glutamate 70 is a catalytic residue. Histidine 73 provides a ligand contact to Zn(2+).

Belongs to the SprT family. Zn(2+) is required as a cofactor.

It localises to the cytoplasm. The sequence is that of Protein SprT from Pseudomonas syringae pv. syringae (strain B728a).